A 447-amino-acid chain; its full sequence is Probable glycine dehydrogenase (decarboxylating) subunit 1 (447 aa).

Belongs to the GcvP family. N-terminal subunit subfamily. The glycine cleavage system is composed of four proteins: P, T, L and H. In this organism, the P 'protein' is a heterodimer of two subunits.

The catalysed reaction is N(6)-[(R)-lipoyl]-L-lysyl-[glycine-cleavage complex H protein] + glycine + H(+) = N(6)-[(R)-S(8)-aminomethyldihydrolipoyl]-L-lysyl-[glycine-cleavage complex H protein] + CO2. In terms of biological role, the glycine cleavage system catalyzes the degradation of glycine. The P protein binds the alpha-amino group of glycine through its pyridoxal phosphate cofactor; CO(2) is released and the remaining methylamine moiety is then transferred to the lipoamide cofactor of the H protein. In Bacillus mycoides (strain KBAB4) (Bacillus weihenstephanensis), this protein is Probable glycine dehydrogenase (decarboxylating) subunit 1.